The following is a 162-amino-acid chain: 3-isopropylmalate dehydratase small subunit (162 aa).

This sequence belongs to the LeuD family. LeuD type 2 subfamily. In terms of assembly, heterodimer of LeuC and LeuD.

It carries out the reaction (2R,3S)-3-isopropylmalate = (2S)-2-isopropylmalate. Its pathway is amino-acid biosynthesis; L-leucine biosynthesis; L-leucine from 3-methyl-2-oxobutanoate: step 2/4. Functionally, catalyzes the isomerization between 2-isopropylmalate and 3-isopropylmalate, via the formation of 2-isopropylmaleate. The sequence is that of 3-isopropylmalate dehydratase small subunit from Pyrobaculum neutrophilum (strain DSM 2338 / JCM 9278 / NBRC 100436 / V24Sta) (Thermoproteus neutrophilus).